Reading from the N-terminus, the 280-residue chain is Pantothenate synthetase (280 aa).

An ATP-binding site is contributed by 26–33 (MGNLHEGH). Residue His-33 is the Proton donor of the active site. Gln-57 is a binding site for (R)-pantoate. Residue Gln-57 coordinates beta-alanine. 145–148 (GKKD) is an ATP binding site. Residue Gln-151 coordinates (R)-pantoate. ATP contacts are provided by residues Val-174 and 182 to 185 (LSSR).

This sequence belongs to the pantothenate synthetase family. Homodimer.

Its subcellular location is the cytoplasm. It catalyses the reaction (R)-pantoate + beta-alanine + ATP = (R)-pantothenate + AMP + diphosphate + H(+). Its pathway is cofactor biosynthesis; (R)-pantothenate biosynthesis; (R)-pantothenate from (R)-pantoate and beta-alanine: step 1/1. Functionally, catalyzes the condensation of pantoate with beta-alanine in an ATP-dependent reaction via a pantoyl-adenylate intermediate. The chain is Pantothenate synthetase from Bordetella bronchiseptica (strain ATCC BAA-588 / NCTC 13252 / RB50) (Alcaligenes bronchisepticus).